The following is a 689-amino-acid chain: Glycine--tRNA ligase beta subunit (689 aa).

Belongs to the class-II aminoacyl-tRNA synthetase family. In terms of assembly, tetramer of two alpha and two beta subunits.

Its subcellular location is the cytoplasm. The enzyme catalyses tRNA(Gly) + glycine + ATP = glycyl-tRNA(Gly) + AMP + diphosphate. This Acinetobacter baylyi (strain ATCC 33305 / BD413 / ADP1) protein is Glycine--tRNA ligase beta subunit.